The following is a 123-amino-acid chain: Large ribosomal subunit protein bL12 (123 aa).

This sequence belongs to the bacterial ribosomal protein bL12 family. In terms of assembly, homodimer. Part of the ribosomal stalk of the 50S ribosomal subunit. Forms a multimeric L10(L12)X complex, where L10 forms an elongated spine to which 2 to 4 L12 dimers bind in a sequential fashion. Binds GTP-bound translation factors.

Functionally, forms part of the ribosomal stalk which helps the ribosome interact with GTP-bound translation factors. Is thus essential for accurate translation. In Clostridium botulinum (strain ATCC 19397 / Type A), this protein is Large ribosomal subunit protein bL12.